The following is a 228-amino-acid chain: 5'-methylthioadenosine/S-adenosylhomocysteine nucleosidase (228 aa).

E11 functions as the Proton acceptor in the catalytic mechanism. Residues G77, I151, and 172-173 contribute to the substrate site; that span reads ME. D196 serves as the catalytic Proton donor.

Belongs to the PNP/UDP phosphorylase family. MtnN subfamily.

It carries out the reaction S-adenosyl-L-homocysteine + H2O = S-(5-deoxy-D-ribos-5-yl)-L-homocysteine + adenine. The catalysed reaction is S-methyl-5'-thioadenosine + H2O = 5-(methylsulfanyl)-D-ribose + adenine. The enzyme catalyses 5'-deoxyadenosine + H2O = 5-deoxy-D-ribose + adenine. The protein operates within amino-acid biosynthesis; L-methionine biosynthesis via salvage pathway; S-methyl-5-thio-alpha-D-ribose 1-phosphate from S-methyl-5'-thioadenosine (hydrolase route): step 1/2. Catalyzes the irreversible cleavage of the glycosidic bond in both 5'-methylthioadenosine (MTA) and S-adenosylhomocysteine (SAH/AdoHcy) to adenine and the corresponding thioribose, 5'-methylthioribose and S-ribosylhomocysteine, respectively. Also cleaves 5'-deoxyadenosine, a toxic by-product of radical S-adenosylmethionine (SAM) enzymes, into 5-deoxyribose and adenine. The sequence is that of 5'-methylthioadenosine/S-adenosylhomocysteine nucleosidase from Staphylococcus haemolyticus (strain JCSC1435).